The following is a 183-amino-acid chain: Isopentenyl-diphosphate Delta-isomerase (183 aa).

His-26 and His-33 together coordinate Mn(2+). Positions 31–165 (SLHLAFSSWL…PWAFSPWMVS (135 aa)) constitute a Nudix hydrolase domain. Cys-68 is a catalytic residue. His-70 is a binding site for Mn(2+). Glu-88 provides a ligand contact to Mg(2+). Glu-115 and Glu-117 together coordinate Mn(2+). Residue Glu-117 is part of the active site.

This sequence belongs to the IPP isomerase type 1 family. Homodimer. It depends on Mg(2+) as a cofactor. Mn(2+) is required as a cofactor.

The protein localises to the cytoplasm. It carries out the reaction isopentenyl diphosphate = dimethylallyl diphosphate. It participates in isoprenoid biosynthesis; dimethylallyl diphosphate biosynthesis; dimethylallyl diphosphate from isopentenyl diphosphate: step 1/1. Catalyzes the 1,3-allylic rearrangement of the homoallylic substrate isopentenyl (IPP) to its highly electrophilic allylic isomer, dimethylallyl diphosphate (DMAPP). The polypeptide is Isopentenyl-diphosphate Delta-isomerase (Enterobacter sp. (strain 638)).